The sequence spans 445 residues: Glutamyl-tRNA(Gln) amidotransferase subunit D (445 aa).

The region spanning Ser93–Asn425 is the Asparaginase/glutaminase domain. Catalysis depends on residues Thr103, Thr179, Asp180, and Lys258.

It belongs to the asparaginase 1 family. GatD subfamily. In terms of assembly, heterodimer of GatD and GatE.

The enzyme catalyses L-glutamyl-tRNA(Gln) + L-glutamine + ATP + H2O = L-glutaminyl-tRNA(Gln) + L-glutamate + ADP + phosphate + H(+). In terms of biological role, allows the formation of correctly charged Gln-tRNA(Gln) through the transamidation of misacylated Glu-tRNA(Gln) in organisms which lack glutaminyl-tRNA synthetase. The reaction takes place in the presence of glutamine and ATP through an activated gamma-phospho-Glu-tRNA(Gln). The GatDE system is specific for glutamate and does not act on aspartate. The polypeptide is Glutamyl-tRNA(Gln) amidotransferase subunit D (Saccharolobus islandicus (strain Y.N.15.51 / Yellowstone #2) (Sulfolobus islandicus)).